The sequence spans 131 residues: Fluoride-specific ion channel FluC 1 (131 aa).

The next 3 helical transmembrane spans lie at 38 to 58, 69 to 89, and 108 to 128; these read FPLS…IAMM, TVMM…TALN, and IATV…ALLA. Residues G79 and S82 each contribute to the Na(+) site.

This sequence belongs to the fluoride channel Fluc/FEX (TC 1.A.43) family.

The protein localises to the cell membrane. The catalysed reaction is fluoride(in) = fluoride(out). Its activity is regulated as follows. Na(+) is not transported, but it plays an essential structural role and its presence is essential for fluoride channel function. Its function is as follows. Fluoride-specific ion channel. Important for reducing fluoride concentration in the cell, thus reducing its toxicity. The protein is Fluoride-specific ion channel FluC 1 of Bifidobacterium longum (strain NCC 2705).